Reading from the N-terminus, the 1528-residue chain is Rho GTPase-activating protein 7 (1528 aa).

Disordered regions lie at residues aspartate 72–glutamate 94, methionine 288–valine 310, and alanine 372–lysine 436. A compositionally biased stretch (basic and acidic residues) spans leucine 81–glutamate 94. A compositionally biased stretch (low complexity) spans serine 374–threonine 384. Positions glycine 396–lysine 436 are enriched in polar residues. One can recognise an SAM domain in the interval lysine 448–glutamate 515. A phosphoserine mark is found at serine 523, serine 526, and serine 566. Disordered regions lie at residues proline 558–arginine 617, arginine 732–serine 764, proline 829–leucine 876, and serine 928–alanine 990. Composition is skewed to low complexity over residues valine 591–serine 605 and valine 734–threonine 760. Residues glutamine 710–glycine 884 form a focal adhesion-targeting (FAT) region. Serine 757 is modified (phosphoserine). Residues leucine 851–glutamate 862 are compositionally biased toward basic and acidic residues. Residues alanine 936 to lysine 948 show a composition bias toward polar residues. A compositionally biased stretch (basic and acidic residues) spans isoleucine 950–threonine 960. Over residues proline 961–asparagine 972 the composition is skewed to polar residues. The tract at residues lysine 1051–arginine 1073 is polybasic cluster (PBR). A Rho-GAP domain is found at valine 1078–phenylalanine 1284. Residues glycine 1314–glutamate 1521 enclose the START domain.

In terms of assembly, interacts with EF1A1, facilitates EF1A1 distribution to the membrane periphery and ruffles upon growth factor stimulation and suppresses cell migration. Interacts with tensin TNS1 (via N-terminus); the interaction is decreased by phosphorylation of TNS1. Interacts with TNS3 and PTEN; in resting cells, interacts with TNS3 (via C2 tensin-type domain) but, following growth factor stimulation, TNS3 and PTEN are phosphorylated which leads to weakened interaction with TNS3 and enhanced interaction with PTEN. Interacts (via C-terminus) with tensin TNS4 (via SH2 domain); the interaction is independent of tyrosine phosphorylation of DLC1. In terms of tissue distribution, highest level of expression in the spleen, with rather lower levels in prostate, testis, ovary, small intestine and colon, but none in the thymus.

It is found in the cytoplasm. It localises to the cell junction. The protein localises to the focal adhesion. The protein resides in the membrane. Functions as a GTPase-activating protein for the small GTPases RHOA, RHOB, RHOC and CDC42, terminating their downstream signaling. This induces morphological changes and detachment through cytoskeletal reorganization, playing a critical role in biological processes such as cell migration and proliferation. Also functions in vivo as an activator of the phospholipase PLCD1. Active DLC1 increases cell migration velocity but reduces directionality. Required for growth factor-induced epithelial cell migration; in resting cells, interacts with TNS3 while PTEN interacts with the p85 regulatory subunit of the PI3K kinase complex but growth factor stimulation induces phosphorylation of TNS3 and PTEN, causing them to change their binding preference so that PTEN interacts with DLC1 and TNS3 interacts with p85. The PTEN-DLC1 complex translocates to the posterior of migrating cells to activate RHOA while the TNS3-p85 complex translocates to the leading edge of migrating cells to promote RAC1 activation. The sequence is that of Rho GTPase-activating protein 7 (DLC1) from Homo sapiens (Human).